The chain runs to 213 residues: Phosphatidylcholine transfer protein (213 aa).

N-acetylmethionine is present on methionine 1. Residues 1–212 enclose the START domain; the sequence is MDPGAGAFSE…MVKACQNYKK (212 aa). A 1,2-diacyl-sn-glycero-3-phosphocholine is bound by residues tyrosine 72 and arginine 78. Serine 139 bears the Phosphoserine mark. An a 1,2-diacyl-sn-glycero-3-phosphocholine-binding site is contributed by glutamine 157. The tract at residues 171–176 is part of the binding site for phosphatidylcholine; the sequence is VFMYYF.

In terms of assembly, interacts with ACOT13/THEM2.

It localises to the cytoplasm. Catalyzes the transfer of phosphatidylcholine between membranes. Binds phosphatidylcholine in a tight 1:1 stoichiometric complex. The polypeptide is Phosphatidylcholine transfer protein (PCTP) (Bos taurus (Bovine)).